Here is a 1515-residue protein sequence, read N- to C-terminus: DNA topoisomerase 2-binding protein 1 (1515 aa).

BRCT domains follow at residues 101-189 (VYNM…KYTD) and 195-284 (FKCP…IYKA). Thr-298 bears the Phosphothreonine mark. 3 consecutive BRCT domains span residues 353-443 (APED…SYIH), 551-636 (REEG…SNPL), and 644-741 (SGVT…HFLV). The tract at residues 759–893 (VSSNPDLPAH…TDSHSASPQL (135 aa)) is interaction with CIP2A. Thr-782 is subject to Phosphothreonine. Residues 799-826 (SQQRGQDPTFPPVRQPLTKEPSLHLDTP) form a disordered region. Thr-851 bears the Phosphothreonine mark. 5 positions are modified to phosphoserine: Ser-862, Ser-863, Ser-866, Ser-888, and Ser-890. Positions 880-891 (SSRNTDSHSASP) are enriched in polar residues. Residues 880 to 901 (SSRNTDSHSASPQLKGAHLEEE) are disordered. The region spanning 902 to 993 (ETRKPLDSVV…KHLPESLYPH (92 aa)) is the BRCT 6 domain. Residues 1020–1055 (VSASKDDGPDHLSVEGNETNTMGTNDKESPLLNGSG) are disordered. A compositionally biased stretch (basic and acidic residues) spans 1023 to 1032 (SKDDGPDHLS). Thr-1064 bears the Phosphothreonine mark. Over residues 1097–1116 (SRSSCNSASSTPDSARSVRS) the composition is skewed to low complexity. Disordered stretches follow at residues 1097-1119 (SRSS…SGRS), 1203-1255 (VTQA…TQEE), and 1491-1515 (KKGG…PRVH). A compositionally biased stretch (pro residues) spans 1217–1229 (PPVAERPLIPEPQ). Positions 1255 to 1347 (ETHRKVKKQY…RFVQEEDYEW (93 aa)) constitute a BRCT 7 domain. The Nuclear localization signal signature appears at 1510-1513 (KRPR).

The protein belongs to the TOPBP1 family. In terms of assembly, interacts (via BRCT domains 1 and 2) with (phosphorylated) MDC1; promoting TOPBP1 recruitment to DNA damage sites during mitosis. Interacts (via BRCT domains 7 and 8) with (autophosphorylated) ATR; promoting activation of ATR. Interacts (via BRCT domains 7 and 8) with (phosphorylated) POLQ; specifically binds POLQ phosphorylated by PLK1, promoting POLQ recruitment to DNA damage sites. Interacts (via BRCT domains 1 and 2) with (phosphorylated) RAD9A. Interacts (via BRCT domain 2) with (phosphorylated) TP53BP1. Interacts (via BRCT domain 2) with (phosphorylated) HTATSF1. Interacts (via BRCT domains 7 and 8) with (phosphorylated) RAD51; promoting RAD51 recruitment to damaged chromatin. Interacts with CIP2A; forming the CIP2A-TOPBP1 complex. Interacts with POLE. Interacts with UBR5. Interacts with E2F1. Interacts with PML. Interacts with SMARCA2. Interacts with SMARCA4. Interacts with RHNO1. May interact with TOP2B. Interacts with TICRR. Interacts with HELB. Post-translationally, phosphorylated on serine and threonine residues in response to X-ray irradiation. Ubiquitinated and degraded by the proteasome. X-ray irradiation reduces ubiquitination. Deubiquitinated by USP13; leading to TOPBP1 stabilizion and activation of the ATR-TOPBP1 axis pathway. Highly expressed in testis.

Its subcellular location is the nucleus. The protein resides in the chromosome. The protein localises to the cytoplasm. It is found in the cytoskeleton. It localises to the microtubule organizing center. Its subcellular location is the centrosome. The protein resides in the spindle pole. Scaffold protein that acts as a key protein-protein adapter in DNA replication and DNA repair. Composed of multiple BRCT domains, which specifically recognize and bind phosphorylated proteins, bringing proteins together into functional combinations. Required for DNA replication initiation but not for the formation of pre-replicative complexes or the elongation stages. Necessary for the loading of replication factors onto chromatin, including GMNC, CDC45, DNA polymerases and components of the GINS complex. Plays a central role in DNA repair by bridging proteins and promoting recruitment of proteins to DNA damage sites. Involved in double-strand break (DSB) repair via homologous recombination in S-phase by promoting the exchange between the DNA replication factor A (RPA) complex and RAD51. Mechanistically, TOPBP1 is recruited to DNA damage sites in S-phase via interaction with phosphorylated HTATSF1, and promotes the loading of RAD51, thereby facilitating RAD51 nucleofilaments formation and RPA displacement, followed by homologous recombination. Involved in microhomology-mediated end-joining (MMEJ) DNA repair by promoting recruitment of polymerase theta (POLQ) to DNA damage sites during mitosis. MMEJ is an alternative non-homologous end-joining (NHEJ) machinery that takes place during mitosis to repair DSBs in DNA that originate in S-phase. Recognizes and binds POLQ phosphorylated by PLK1, enabling its recruitment to DSBs for subsequent repair. Involved in G1 DNA damage checkpoint by acting as a molecular adapter that couples TP53BP1 and the 9-1-1 complex. In response to DNA damage, triggers the recruitment of checkpoint signaling proteins on chromatin, which activate the CHEK1 signaling pathway and block S-phase progression. Acts as an activator of the kinase activity of ATR. Also required for chromosomal stability when DSBs occur during mitosis by forming filamentous assemblies that bridge MDC1 and tether broken chromosomes during mitosis. Together with CIP2A, plays an essential role in the response to genome instability generated by the presence of acentric chromosome fragments derived from shattered chromosomes within micronuclei. Micronuclei, which are frequently found in cancer cells, consist of chromatin surrounded by their own nuclear membrane: following breakdown of the micronuclear envelope, a process associated with chromothripsis, the CIP2A-TOPBP1 complex tethers chromosome fragments during mitosis to ensure clustered segregation of the fragments to a single daughter cell nucleus, facilitating re-ligation with limited chromosome scattering and loss. Recruits the SWI/SNF chromatin remodeling complex to E2F1-responsive promoters, thereby down-regulating E2F1 activity and inhibiting E2F1-dependent apoptosis during G1/S transition and after DNA damage. The protein is DNA topoisomerase 2-binding protein 1 of Mus musculus (Mouse).